Reading from the N-terminus, the 208-residue chain is N-(5'-phosphoribosyl)anthranilate isomerase (208 aa).

It belongs to the TrpF family.

The enzyme catalyses N-(5-phospho-beta-D-ribosyl)anthranilate = 1-(2-carboxyphenylamino)-1-deoxy-D-ribulose 5-phosphate. The protein operates within amino-acid biosynthesis; L-tryptophan biosynthesis; L-tryptophan from chorismate: step 3/5. The polypeptide is N-(5'-phosphoribosyl)anthranilate isomerase (Desulforamulus reducens (strain ATCC BAA-1160 / DSM 100696 / MI-1) (Desulfotomaculum reducens)).